The sequence spans 561 residues: MSGGDGRGPGNSGLGHNGGQASGNVNGTSGKGGPSSGGGTDPNSGPGWGTTHTPNGDIHNYNPGEFGNGGSKPGGNGGNSGNHSGSSGGGQSSATAMAFGLPALATPGAEGPALSFSGDALSSAVADVLAALKGPFKFGLWGIAIYGVLPSEIAKDDPKMMSKIMTSLPADTVTETPASTLPLDQATVRVRQRVVDVVKDERQHIAVVAGRPMSVPVVDAKPTKRPGVFSVSIPGLPALQVSVPKGVPAAKAPPKGIVAEKGDSRPAGFTAGGNSREAVIRFPKETGQKPVYVSVTDVLTPAQVKQRQEEEKRRQQAWDAAHPEEGLKREYDKAKAELDAEDKNITTLNGRITSTEKAIPGARAAVQEADKKVKEAEANKDDFVTYNPPHEYGSGWQDQVRYLDKDIQNQNAKLKAAQASLNAMNDALSRDKAALSGAMESRKQKEKKAKEAENKLNEEKKKPRKGTKDYGHDYFPDPKTEDIKGLGELKEGKPKTPKQGGGGKRARWYGDKKRKIYEWDSQHGELEGYRASDGEHLGAFDPKTGKQVKGPDPKRNIKKYL.

Gly residues-rich tracts occupy residues M1–A21, S29–T40, and F66–Q91. Disordered regions lie at residues M1 to S93, P254 to G273, V304 to G326, K432 to R507, and R530 to L561. Residues M1–T180 form an involved in the translocation of the protein across the cell membrane region. The tract at residues D200–S420 is responsible for the receptor binding activity. Basic and acidic residues-rich tracts occupy residues Q306–G326 and E440–P494. Residues L421–L561 are ribonuclease activity. Residues F540 to L561 are binding of immunity protein.

Belongs to the cloacin colicin family.

Functionally, inactivates ribosomes by hydrolyzing 16S RNA in 30S ribosomes at a specific site. In terms of biological role, colicins are polypeptide toxins produced by and active against E.coli and closely related bacteria. This Escherichia coli protein is Cloacin (ccl).